Here is a 384-residue protein sequence, read N- to C-terminus: Carbamoyl phosphate synthase small chain (384 aa).

The CPSase stretch occupies residues 1 to 192 (MMKRIPAILV…LTDNIRVHRV (192 aa)). L-glutamine is bound by residues Ser51, Gly244, and Gly246. A Glutamine amidotransferase type-1 domain is found at 196-382 (KVIVIDFGVK…IEIMTKSKNK (187 aa)). Residue Cys272 is the Nucleophile of the active site. Residues Met273, Gln276, Asn312, Gly314, and Phe315 each contribute to the L-glutamine site. Residues His355 and Glu357 contribute to the active site.

The protein belongs to the CarA family. In terms of assembly, composed of two chains; the small (or glutamine) chain promotes the hydrolysis of glutamine to ammonia, which is used by the large (or ammonia) chain to synthesize carbamoyl phosphate. Tetramer of heterodimers (alpha,beta)4.

It is found in the plastid. Its subcellular location is the chloroplast. It catalyses the reaction hydrogencarbonate + L-glutamine + 2 ATP + H2O = carbamoyl phosphate + L-glutamate + 2 ADP + phosphate + 2 H(+). The enzyme catalyses L-glutamine + H2O = L-glutamate + NH4(+). It participates in amino-acid biosynthesis; L-arginine biosynthesis; carbamoyl phosphate from bicarbonate: step 1/1. The protein operates within pyrimidine metabolism; UMP biosynthesis via de novo pathway; (S)-dihydroorotate from bicarbonate: step 1/3. In terms of biological role, small subunit of the glutamine-dependent carbamoyl phosphate synthetase (CPSase). CPSase catalyzes the formation of carbamoyl phosphate from the ammonia moiety of glutamine, carbonate, and phosphate donated by ATP, constituting the first step of 2 biosynthetic pathways, one leading to arginine and/or urea and the other to pyrimidine nucleotides. The small subunit (glutamine amidotransferase) binds and cleaves glutamine to supply the large subunit with the substrate ammonia. This Pyropia yezoensis (Susabi-nori) protein is Carbamoyl phosphate synthase small chain.